The chain runs to 325 residues: Glutarate 2-hydroxylase (325 aa).

Fe cation contacts are provided by His-160, Asp-162, and His-292.

The protein belongs to the glutarate hydroxylase family. As to quaternary structure, homotetramer. Requires Fe(2+) as cofactor.

It catalyses the reaction glutarate + 2-oxoglutarate + O2 = (S)-2-hydroxyglutarate + succinate + CO2. It participates in amino-acid degradation. In terms of biological role, acts as an alpha-ketoglutarate-dependent dioxygenase catalyzing hydroxylation of glutarate (GA) to L-2-hydroxyglutarate (L2HG). Functions in a L-lysine degradation pathway that proceeds via cadaverine, glutarate and L-2-hydroxyglutarate. The chain is Glutarate 2-hydroxylase from Salmonella newport (strain SL254).